The chain runs to 456 residues: tRNA modification GTPase MnmE (456 aa).

(6S)-5-formyl-5,6,7,8-tetrahydrofolate-binding residues include arginine 23, glutamate 85, and arginine 124. One can recognise a TrmE-type G domain in the interval 220–375 (GLRVLIFGKP…LVSAIQERFV (156 aa)). Asparagine 230 is a binding site for K(+). Residues 230–235 (NVGKSS), 249–255 (TDIPGTT), and 274–277 (DTAG) contribute to the GTP site. Serine 234 contacts Mg(2+). Residues threonine 249, isoleucine 251, and threonine 254 each contribute to the K(+) site. Threonine 255 serves as a coordination point for Mg(2+). Lysine 456 is a binding site for (6S)-5-formyl-5,6,7,8-tetrahydrofolate.

The protein belongs to the TRAFAC class TrmE-Era-EngA-EngB-Septin-like GTPase superfamily. TrmE GTPase family. Homodimer. Heterotetramer of two MnmE and two MnmG subunits. It depends on K(+) as a cofactor.

The protein resides in the cytoplasm. Exhibits a very high intrinsic GTPase hydrolysis rate. Involved in the addition of a carboxymethylaminomethyl (cmnm) group at the wobble position (U34) of certain tRNAs, forming tRNA-cmnm(5)s(2)U34. The polypeptide is tRNA modification GTPase MnmE (Syntrophotalea carbinolica (strain DSM 2380 / NBRC 103641 / GraBd1) (Pelobacter carbinolicus)).